The chain runs to 481 residues: Chromosomal replication initiator protein DnaA (481 aa).

Residues 1 to 74 form a domain I, interacts with DnaA modulators region; that stretch reads MSQDLWSFCL…ELGAEFHGAP (74 aa). The domain II stretch occupies residues 74-144; that stretch reads PIEIELVLPA…TASDLAYEKT (71 aa). A disordered region spans residues 101–123; that stretch reads AGPAPAPTPSQAPAATAAAPAVV. Positions 111–123 are enriched in low complexity; that stretch reads QAPAATAAAPAVV. The tract at residues 145–361 is domain III, AAA+ region; the sequence is RLNADFTFDT…GALNKVVAFA (217 aa). 4 residues coordinate ATP: Gly189, Gly191, Lys192, and Thr193. Residues 362 to 481 form a domain IV, binds dsDNA region; that stretch reads RFHGRGITLE…VHVLTQVLRG (120 aa).

This sequence belongs to the DnaA family. Oligomerizes as a right-handed, spiral filament on DNA at oriC.

The protein localises to the cytoplasm. Functionally, plays an essential role in the initiation and regulation of chromosomal replication. ATP-DnaA binds to the origin of replication (oriC) to initiate formation of the DNA replication initiation complex once per cell cycle. Binds the DnaA box (a 9 base pair repeat at the origin) and separates the double-stranded (ds)DNA. Forms a right-handed helical filament on oriC DNA; dsDNA binds to the exterior of the filament while single-stranded (ss)DNA is stabiized in the filament's interior. The ATP-DnaA-oriC complex binds and stabilizes one strand of the AT-rich DNA unwinding element (DUE), permitting loading of DNA polymerase. After initiation quickly degrades to an ADP-DnaA complex that is not apt for DNA replication. Binds acidic phospholipids. The polypeptide is Chromosomal replication initiator protein DnaA (Aromatoleum aromaticum (strain DSM 19018 / LMG 30748 / EbN1) (Azoarcus sp. (strain EbN1))).